We begin with the raw amino-acid sequence, 345 residues long: Probable glucan endo-1,3-beta-glucosidase BG4 (345 aa).

Residues 1–22 (MLYSPKKLFLFFLSCIVLYVNS) form the signal peptide. 2 N-linked (GlcNAc...) asparagine glycosylation sites follow: asparagine 23 and asparagine 119. Glutamate 128 (proton donor) is an active-site residue. Catalysis depends on glutamate 267, which acts as the Nucleophile. 2 N-linked (GlcNAc...) asparagine glycosylation sites follow: asparagine 277 and asparagine 306.

It belongs to the glycosyl hydrolase 17 family.

It is found in the secreted. The catalysed reaction is Hydrolysis of (1-&gt;3)-beta-D-glucosidic linkages in (1-&gt;3)-beta-D-glucans.. Its function is as follows. May play a role in plant defense against pathogens. The sequence is that of Probable glucan endo-1,3-beta-glucosidase BG4 from Arabidopsis thaliana (Mouse-ear cress).